We begin with the raw amino-acid sequence, 175 residues long: Zinc metalloproteinase-disintegrin-like catroriarin (175 aa).

Residues 1-63 enclose the Disintegrin domain; it reads NPCCDAATCK…ECPADVFHKN (63 aa). 9 disulfides stabilise this stretch: Cys-3-Cys-26, Cys-17-Cys-23, Cys-22-Cys-48, Cys-35-Cys-55, Cys-42-Cys-74, Cys-67-Cys-79, Cys-101-Cys-147, Cys-114-Cys-124, and Cys-131-Cys-171. The short motif at 41 to 43 is the D/ECD-tripeptide element; the sequence is ECD. 5 residues coordinate Ca(2+): Asp-43, Pro-44, Glu-46, Asp-58, and Val-59.

The protein belongs to the venom metalloproteinase (M12B) family. P-III subfamily. P-IIIa sub-subfamily. Monomer. It depends on Zn(2+) as a cofactor. Post-translationally, glycosylated. Expressed by the venom gland.

It is found in the secreted. Snake venom metalloproteinase that impairs hemostasis in the envenomed animal. This chain is Zinc metalloproteinase-disintegrin-like catroriarin, found in Crotalus atrox (Western diamondback rattlesnake).